A 478-amino-acid polypeptide reads, in one-letter code: MRVLFVASEAHPFIKSGGLGDVAGALPKELARKGVDVRVVIPKYREINNELKNKLRFNKWFNVDVGWRNQYCGILEYEYDGVIYYFVDNEYYFSRGGMYGHYDDAERFAFFDRAVLDMIKQLDWKPNVIHCNDWQTGMIPVLLKLEYMRKDMFYWDIKSVFSIHNIAFQGVFDPVILPELFGYDYEQYTNTNLKFDDGVGFMKGAINYSDMITTVSYSYAEEIKTPEFGERLDWLLREKSYMLRGILNGIDYDEFNPKNDSLINKNYDVNNINDKYENKRNLQSELGLSVNENIPMIAMVTRLTSQKGLDLLVHISERLLQNDIQLVIVGTGDKHYEDHFKWLDYKYGNKVSANIRFDNNLAHKAYAASDMFLMPSLFEPCGLGQLIALRYGSIPIVRETGGLKDTIRAYNEYTGEGNGFSFYNYNADELLHIIEYALKIYYDKNKWSNLVKNAMNSNNSWSKSADEYLNMYKELSYR.

ADP-alpha-D-glucose is bound at residue Lys15.

The protein belongs to the glycosyltransferase 1 family. Bacterial/plant glycogen synthase subfamily.

It carries out the reaction [(1-&gt;4)-alpha-D-glucosyl](n) + ADP-alpha-D-glucose = [(1-&gt;4)-alpha-D-glucosyl](n+1) + ADP + H(+). Its pathway is glycan biosynthesis; glycogen biosynthesis. Functionally, synthesizes alpha-1,4-glucan chains using ADP-glucose. In Clostridium botulinum (strain Eklund 17B / Type B), this protein is Glycogen synthase.